We begin with the raw amino-acid sequence, 73 residues long: Alpha-amylase inhibitor Paim-1 (73 aa).

Cystine bridges form between Cys8–Cys24 and Cys42–Cys70.

Its function is as follows. Inhibits mammalian alpha-amylases specifically but has no action on plant and microbial alpha-amylases. This chain is Alpha-amylase inhibitor Paim-1, found in Streptomyces olivaceoviridis (Streptomyces corchorusii).